The primary structure comprises 230 residues: V-type proton ATPase subunit E1 (230 aa).

N-acetylmethionine is present on methionine 1. Residues arginine 8–lysine 67 adopt a coiled-coil conformation. Phosphoserine is present on serine 178.

It belongs to the V-ATPase E subunit family. As to quaternary structure, V-ATPase is a heteromultimeric enzyme composed of a peripheral catalytic V1 complex (components A to H) attached to an integral membrane V0 proton pore complex (components: a, c, c'', d and e).

It is found in the vacuole membrane. Its function is as follows. Subunit of the peripheral V1 complex of vacuolar ATPase essential for assembly or catalytic function. V-ATPase is responsible for acidifying a variety of intracellular compartments in eukaryotic cells. Required for Golgi organization and vacuole function in embryogenesis. The polypeptide is V-type proton ATPase subunit E1 (VHA-E1) (Arabidopsis thaliana (Mouse-ear cress)).